Here is a 370-residue protein sequence, read N- to C-terminus: 3-isopropylmalate dehydrogenase (370 aa).

77–90 is a binding site for NAD(+); the sequence is GPKWDSVPYEVRPE. Positions 97, 107, 135, and 226 each coordinate substrate. Mg(2+)-binding residues include aspartate 226, aspartate 250, and aspartate 254. Residue 290 to 302 coordinates NAD(+); sequence GSAPDIAGQGLAN.

This sequence belongs to the isocitrate and isopropylmalate dehydrogenases family. LeuB type 1 subfamily. As to quaternary structure, homodimer. Mg(2+) serves as cofactor. Requires Mn(2+) as cofactor.

It localises to the cytoplasm. It catalyses the reaction (2R,3S)-3-isopropylmalate + NAD(+) = 4-methyl-2-oxopentanoate + CO2 + NADH. It participates in amino-acid biosynthesis; L-leucine biosynthesis; L-leucine from 3-methyl-2-oxobutanoate: step 3/4. Catalyzes the oxidation of 3-carboxy-2-hydroxy-4-methylpentanoate (3-isopropylmalate) to 3-carboxy-4-methyl-2-oxopentanoate. The product decarboxylates to 4-methyl-2 oxopentanoate. The protein is 3-isopropylmalate dehydrogenase of Nitrobacter winogradskyi (strain ATCC 25391 / DSM 10237 / CIP 104748 / NCIMB 11846 / Nb-255).